Here is a 217-residue protein sequence, read N- to C-terminus: Octanoyltransferase (217 aa).

A BPL/LPL catalytic domain is found at 34 to 216 (SETRDELWLL…AASRASRHDR (183 aa)). Substrate is bound by residues 73-80 (RGGQVTWH), 140-142 (ALG), and 153-155 (GLS). Cys171 (acyl-thioester intermediate) is an active-site residue.

Belongs to the LipB family.

It is found in the cytoplasm. It catalyses the reaction octanoyl-[ACP] + L-lysyl-[protein] = N(6)-octanoyl-L-lysyl-[protein] + holo-[ACP] + H(+). It functions in the pathway protein modification; protein lipoylation via endogenous pathway; protein N(6)-(lipoyl)lysine from octanoyl-[acyl-carrier-protein]: step 1/2. Functionally, catalyzes the transfer of endogenously produced octanoic acid from octanoyl-acyl-carrier-protein onto the lipoyl domains of lipoate-dependent enzymes. Lipoyl-ACP can also act as a substrate although octanoyl-ACP is likely to be the physiological substrate. The polypeptide is Octanoyltransferase (Halorhodospira halophila (strain DSM 244 / SL1) (Ectothiorhodospira halophila (strain DSM 244 / SL1))).